We begin with the raw amino-acid sequence, 450 residues long: UDP-N-acetylmuramoylalanine--D-glutamate ligase (450 aa).

119 to 125 (GSNGKTT) contributes to the ATP binding site.

Belongs to the MurCDEF family.

Its subcellular location is the cytoplasm. It catalyses the reaction UDP-N-acetyl-alpha-D-muramoyl-L-alanine + D-glutamate + ATP = UDP-N-acetyl-alpha-D-muramoyl-L-alanyl-D-glutamate + ADP + phosphate + H(+). Its pathway is cell wall biogenesis; peptidoglycan biosynthesis. In terms of biological role, cell wall formation. Catalyzes the addition of glutamate to the nucleotide precursor UDP-N-acetylmuramoyl-L-alanine (UMA). The polypeptide is UDP-N-acetylmuramoylalanine--D-glutamate ligase (Streptococcus thermophilus (strain ATCC BAA-491 / LMD-9)).